The chain runs to 198 residues: Recombination protein RecR (198 aa).

The C4-type zinc finger occupies 56–71; sequence CKVCGNFSEEDECVIC. Positions 79–174 constitute a Toprim domain; sequence GVICVVEEPK…RVSKLASGLP (96 aa).

The protein belongs to the RecR family.

Its function is as follows. May play a role in DNA repair. It seems to be involved in an RecBC-independent recombinational process of DNA repair. It may act with RecF and RecO. The sequence is that of Recombination protein RecR from Tropheryma whipplei (strain TW08/27) (Whipple's bacillus).